Consider the following 81-residue polypeptide: MSYLLAIGIAALIVALIIAIVVWTIVYIEYKKLVRQRKINKLYKRIRERAEDSGNESEGDAEELAALGEMGPFIPGDINNL.

Topologically, residues 1 to 7 (MSYLLAI) are extracellular. The helical transmembrane segment at 8–28 (GIAALIVALIIAIVVWTIVYI) threads the bilayer. Residues 29 to 81 (EYKKLVRQRKINKLYKRIRERAEDSGNESEGDAEELAALGEMGPFIPGDINNL) lie on the Cytoplasmic side of the membrane. Residues Ser53 and Ser57 each carry the phosphoserine; by host CK2 modification.

The protein belongs to the HIV-1 VPU protein family. In terms of assembly, homopentamer. Interacts with host CD4 and BRTC; these interactions induce proteasomal degradation of CD4. Interacts with host BST2; this interaction leads to the degradation of host BST2. Interacts with host FBXW11. Interacts with host AP1M1; this interaction plays a role in the mistrafficking and subsequent degradation of host BST2. Interacts with host RANBP2; this interaction allows Vpu to down-regulate host BLM sumoylation. Post-translationally, phosphorylated by host CK2. This phosphorylation is necessary for interaction with human BTRC and degradation of CD4.

It localises to the host membrane. Its activity is regulated as follows. Ion channel activity is inhibited by hexamethylene amiloride in vitro. In terms of biological role, enhances virion budding by targeting host CD4 and Tetherin/BST2 to proteasome degradation. Degradation of CD4 prevents any unwanted premature interactions between viral Env and its host receptor CD4 in the endoplasmic reticulum. Degradation of antiretroviral protein Tetherin/BST2 is important for virion budding, as BST2 tethers new viral particles to the host cell membrane. Mechanistically, Vpu bridges either CD4 or BST2 to BTRC, a substrate recognition subunit of the Skp1/Cullin/F-box protein E3 ubiquitin ligase, induces their ubiquitination and subsequent proteasomal degradation. The alteration of the E3 ligase specificity by Vpu seems to promote the degradation of host IKBKB, leading to NF-kappa-B down-regulation and subsequent apoptosis. Acts as a viroporin that forms an oligomeric ion channel in membranes. Modulates the host DNA repair mechanisms to promote degradation of nuclear viral cDNA in cells that are already productively infected in order to suppress immune sensing and proviral hyper-integration (superinfection). Manipulates PML-NBs and modulates SUMOylation of host BLM protein thereby enhancing its DNA-end processing activity toward viral unintegrated linear DNA. Also inhibits RAD52-mediated homologous repair of viral cDNA, preventing the generation of dead-end circular forms of single copies of the long terminal repeat and permitting sustained nucleolytic attack. The chain is Protein Vpu from Homo sapiens (Human).